We begin with the raw amino-acid sequence, 138 residues long: Centromere protein S (138 aa).

Position 1 is an N-acetylmethionine (Met-1). The tract at residues 112 to 138 (AKKKKKLEDENRNSVESAEAGVEESEN) is disordered.

It belongs to the TAF9 family. CENP-S/MHF1 subfamily. As to quaternary structure, heterodimer with CENPX, sometimes called MHF; this interaction stabilizes both partners. MHF heterodimers can assemble to form tetrameric structures. MHF also coassemble with CENPT-CENPW heterodimers at centromeres to form the tetrameric CENP-T-W-S-X complex. Forms a discrete complex with FANCM and CENPX, called FANCM-MHF; this interaction, probably mediated by direct binding between CENPS and FANCM, leads to synergistic activation of double-stranded DNA binding and strongly stimulates FANCM-mediated DNA remodeling. Recruited by FANCM to the Fanconi anemia (FA) core complex, which consists of CENPS, CENPX, FANCA, FANCB, FANCC, FANCE, FANCF, FANCG, FANCL, FANCM, FAAP24 and FAAP100. The FA core complex associates with Bloom syndrome (BLM) complex, which consists of at least BLM, DNA topoisomerase 3-alpha (TOP3A), RMI1/BLAP75, RPA1/RPA70 and RPA2/RPA32. The super complex between FA and BLM is called BRAFT. Component of the CENPA-CAD complex, composed of CENPI, CENPK, CENPL, CENPO, CENPP, CENPQ, CENPR and CENPS. The CENPA-CAD complex is probably recruited on centromeres by the CENPA-NAC complex, at least composed of CENPA, CENPC, CENPH, CENPM, CENPN, CENPT and CENPU.

Its subcellular location is the nucleus. The protein localises to the chromosome. The protein resides in the centromere. It localises to the kinetochore. Functionally, DNA-binding component of the Fanconi anemia (FA) core complex. Required for the normal activation of the FA pathway, leading to monoubiquitination of the FANCI-FANCD2 complex in response to DNA damage, cellular resistance to DNA cross-linking drugs, and prevention of chromosomal breakage. In complex with CENPX (MHF heterodimer), crucial cofactor for FANCM in both binding and ATP-dependent remodeling of DNA. Stabilizes FANCM. In complex with CENPX and FANCM (but not other FANC proteins), rapidly recruited to blocked forks and promotes gene conversion at blocked replication forks. In complex with CENPT, CENPW and CENPX (CENP-T-W-S-X heterotetramer), involved in the formation of a functional kinetochore outer plate, which is essential for kinetochore-microtubule attachment and faithful mitotic progression. As a component of MHF and CENP-T-W-S-X complexes, binds DNA and bends it to form a nucleosome-like structure. DNA-binding function is fulfilled in the presence of CENPX, with the following preference for DNA substates: Holliday junction &gt; double-stranded &gt; splay arm &gt; single-stranded. Does not bind DNA on its own. The sequence is that of Centromere protein S (CENPS) from Bos taurus (Bovine).